Consider the following 360-residue polypeptide: Inward rectifier potassium channel 13 (360 aa).

Topologically, residues 1-50 are cytoplasmic; the sequence is MDGSHCKVIAPLLTERHQRMVTKDGHSTLQMDGAQTGLAYLRDAWGILMD. The chain crosses the membrane as a helical span at residues 51 to 77; sequence MRWRWMMLVFSASFVIHWLVFAVLWYI. The Extracellular portion of the chain corresponds to 78 to 105; sequence LAEMNGDLGLDHDAPPENHTICVKYITS. Residues 106 to 122 constitute an intramembrane region (helical; Pore-forming); it reads FTAAFSFSLETQLTIGY. The short motif at 119–124 is the Selectivity filter element; that stretch reads TIGYGT. At 123-131 the chain is on the extracellular side; that stretch reads GTMFPSGDC. The helical transmembrane segment at 132-157 threads the bilayer; it reads PSAIALLAIQMLLGLMLEAFITGAFV. Residues 158-360 are Cytoplasmic-facing; the sequence is AKIARPKNRA…FQISETGLTE (203 aa). Serine 287 carries the post-translational modification Phosphoserine.

Belongs to the inward rectifier-type potassium channel (TC 1.A.2.1) family. Homotetramer. Interacts with RAB28; the interaction may facilitate cone outer segments phagocytosis. Post-translationally, phosphorylation at Ser-287 by PKA increases them.

Its subcellular location is the membrane. The protein resides in the cell membrane. It carries out the reaction K(+)(in) = K(+)(out). Its activity is regulated as follows. Inhibited by Ba(2+) and Cs(+), although sensitivity to those inhibitors is much lower than in other Kir channels. Functionally, inward rectifier potassium channels are characterized by a greater tendency to allow potassium to flow into the cell rather than out of it. Their voltage dependence is regulated by the concentration of extracellular potassium; as external potassium is raised, the voltage range of the channel opening shifts to more positive voltages. The inward rectification is mainly due to the blockage of outward current by internal magnesium. KCNJ13 has a very low single channel conductance, low sensitivity to block by external barium and cesium, and no dependence of its inward rectification properties on the internal blocking particle magnesium. This Bos taurus (Bovine) protein is Inward rectifier potassium channel 13 (KCNJ13).